Consider the following 507-residue polypeptide: Maturase K (507 aa).

The protein belongs to the intron maturase 2 family. MatK subfamily.

Its subcellular location is the plastid. The protein resides in the chloroplast. Functionally, usually encoded in the trnK tRNA gene intron. Probably assists in splicing its own and other chloroplast group II introns. The protein is Maturase K of Cananga odorata (Ylang-ylang tree).